Reading from the N-terminus, the 293-residue chain is MAIVSAEKFVQAARENGYAVGGFNTNNLEWTQAILRAAEAKQAPVLIQTSMGAAKYMGGYKVCQSLITNLVESMGITVPVAIHLDHGHYEDALECIEVGYTSIMFDGSHLPVEENLAKTAEVVKIAHAKGVSVEAEVGTIGGEEDGIIGKGELAPIEDAKAMVETGIDFLAAGIGNIHGPYPENWEGLALDHLEKLTAAVPGFPIVLHGGSGIPDDQIKEAIRLGVAKVNVNTESQIAFSNATREFARNYEANEAEYDGKKLFDPRKFLAPGMKAVQGAVEERIDVFGSANKA.

Serine 50 provides a ligand contact to D-glyceraldehyde 3-phosphate. The active-site Proton donor is aspartate 85. The Zn(2+) site is built by histidine 86, aspartate 106, glutamate 136, and histidine 178. Glycine 179 lines the dihydroxyacetone phosphate pocket. Residue histidine 208 participates in Zn(2+) binding. Dihydroxyacetone phosphate-binding positions include 209-211 (GGS) and 230-233 (NVNT).

This sequence belongs to the class II fructose-bisphosphate aldolase family. It depends on Zn(2+) as a cofactor.

It carries out the reaction beta-D-fructose 1,6-bisphosphate = D-glyceraldehyde 3-phosphate + dihydroxyacetone phosphate. It functions in the pathway carbohydrate degradation; glycolysis; D-glyceraldehyde 3-phosphate and glycerone phosphate from D-glucose: step 4/4. In terms of biological role, catalyzes the aldol condensation of dihydroxyacetone phosphate (DHAP or glycerone-phosphate) with glyceraldehyde 3-phosphate (G3P) to form fructose 1,6-bisphosphate (FBP) in gluconeogenesis and the reverse reaction in glycolysis. The polypeptide is Fructose-bisphosphate aldolase (fba) (Streptococcus pyogenes serotype M1).